A 268-amino-acid chain; its full sequence is Homeobox protein Hox-C4a (268 aa).

Residues 70–129 form a disordered region; sequence PEPDTQRGHGLPHAGHLLGKGQSASCEPPPLPLSPATPSAASSACNQATPEHPNSSASAK. Low complexity-rich tracts occupy residues 77–95 and 105–114; these read GHGL…SASC and ATPSAASSAC. The segment covering 115–128 has biased composition (polar residues); that stretch reads NQATPEHPNSSASA. Residues 133-138 carry the Antp-type hexapeptide motif; it reads VYPWMK. Positions 154-213 form a DNA-binding region, homeobox; it reads PKRSRTAYTRQQVLELEKEFHYNRYLTRRRRIEIAHSLVLSERQIKIWFQNRRMKWKKDH. The interval 212–268 is disordered; sequence DHRLPNTKVRSSSSTGISSGSNTSSAAGVVAAASTTNTMSASEDLSGTERGEDITRL. A compositionally biased stretch (low complexity) spans 222-253; that stretch reads SSSSTGISSGSNTSSAAGVVAAASTTNTMSAS. The span at 258–268 shows a compositional bias: basic and acidic residues; it reads GTERGEDITRL.

Belongs to the Antp homeobox family. Deformed subfamily.

It is found in the nucleus. Functionally, sequence-specific transcription factor which is part of a developmental regulatory system that provides cells with specific positional identities on the anterior-posterior axis. This chain is Homeobox protein Hox-C4a (hoxc4a), found in Danio rerio (Zebrafish).